Reading from the N-terminus, the 45-residue chain is Large ribosomal subunit protein bL34 (45 aa).

The tract at residues 1–27 (MTKRTLGGTSRKRKRVSGFRVRMRTHT) is disordered. Basic residues predominate over residues 10-27 (SRKRKRVSGFRVRMRTHT).

The protein belongs to the bacterial ribosomal protein bL34 family.

This Prochlorococcus marinus (strain MIT 9211) protein is Large ribosomal subunit protein bL34.